A 490-amino-acid chain; its full sequence is Cytochrome P450 2C6 (490 aa).

Lys-249 and Lys-375 each carry N6-acetyllysine. Cys-435 lines the heme pocket.

It belongs to the cytochrome P450 family. Heme is required as a cofactor.

It is found in the endoplasmic reticulum membrane. The protein resides in the microsome membrane. It carries out the reaction an organic molecule + reduced [NADPH--hemoprotein reductase] + O2 = an alcohol + oxidized [NADPH--hemoprotein reductase] + H2O + H(+). In terms of biological role, cytochromes P450 are a group of heme-thiolate monooxygenases. In liver microsomes, this enzyme is involved in an NADPH-dependent electron transport pathway. It oxidizes a variety of structurally unrelated compounds, including steroids, fatty acids, and xenobiotics. The protein is Cytochrome P450 2C6 (Cyp2c6) of Rattus norvegicus (Rat).